A 262-amino-acid chain; its full sequence is Sulfur carrier protein FdhD (262 aa).

The active-site Cysteine persulfide intermediate is Cys105. A Mo-bis(molybdopterin guanine dinucleotide)-binding site is contributed by 246–251 (FVRKNR).

Belongs to the FdhD family.

Its subcellular location is the cytoplasm. Its function is as follows. Required for formate dehydrogenase (FDH) activity. Acts as a sulfur carrier protein that transfers sulfur from IscS to the molybdenum cofactor prior to its insertion into FDH. This chain is Sulfur carrier protein FdhD, found in Picrophilus torridus (strain ATCC 700027 / DSM 9790 / JCM 10055 / NBRC 100828 / KAW 2/3).